A 212-amino-acid polypeptide reads, in one-letter code: MPLNEIVGVIGNLISNGYIKKQSVIDALMTVPRHKFIPKSMEEYAYIDSPLGIGYGQTISAIHMVGIMCEELDLDVGQNVLEVGTGSGYHAAVVSEIVGESGNVTTIERIPELFEKSKQVLLELGYENVEVVLGDGTKGYLENSPYDRIYVTASGPDVPKALFEQLNDGGIILAPVGSHFQTLMRYKKIHGKIFEEKLLEVAFVPLIGENGF.

The active site involves S60.

This sequence belongs to the methyltransferase superfamily. L-isoaspartyl/D-aspartyl protein methyltransferase family.

It localises to the cytoplasm. The enzyme catalyses [protein]-L-isoaspartate + S-adenosyl-L-methionine = [protein]-L-isoaspartate alpha-methyl ester + S-adenosyl-L-homocysteine. Its function is as follows. Catalyzes the methyl esterification of L-isoaspartyl residues in peptides and proteins that result from spontaneous decomposition of normal L-aspartyl and L-asparaginyl residues. It plays a role in the repair and/or degradation of damaged proteins. The chain is Protein-L-isoaspartate O-methyltransferase from Methanococcus maripaludis (strain C7 / ATCC BAA-1331).